The primary structure comprises 444 residues: Glutamate-1-semialdehyde 2,1-aminomutase (444 aa).

Lysine 278 bears the N6-(pyridoxal phosphate)lysine mark.

It belongs to the class-III pyridoxal-phosphate-dependent aminotransferase family. HemL subfamily. In terms of assembly, homodimer. Requires pyridoxal 5'-phosphate as cofactor.

It localises to the cytoplasm. The catalysed reaction is (S)-4-amino-5-oxopentanoate = 5-aminolevulinate. Its pathway is porphyrin-containing compound metabolism; protoporphyrin-IX biosynthesis; 5-aminolevulinate from L-glutamyl-tRNA(Glu): step 2/2. The chain is Glutamate-1-semialdehyde 2,1-aminomutase from Deinococcus radiodurans (strain ATCC 13939 / DSM 20539 / JCM 16871 / CCUG 27074 / LMG 4051 / NBRC 15346 / NCIMB 9279 / VKM B-1422 / R1).